Here is a 102-residue protein sequence, read N- to C-terminus: Small ribosomal subunit protein uS10 (102 aa).

Belongs to the universal ribosomal protein uS10 family. In terms of assembly, part of the 30S ribosomal subunit.

Its function is as follows. Involved in the binding of tRNA to the ribosomes. The sequence is that of Small ribosomal subunit protein uS10 from Ligilactobacillus salivarius (strain UCC118) (Lactobacillus salivarius).